Here is a 472-residue protein sequence, read N- to C-terminus: D-2-hydroxyglutarate dehydrogenase (472 aa).

The 180-residue stretch at 36 to 215 folds into the FAD-binding PCMH-type domain; that stretch reads WTPNPLAIAL…VEATLRLTDP (180 aa). The (R)-2-hydroxyglutarate site is built by R323, T327, and K337. Positions 323, 327, and 337 each coordinate (R)-malate. H372 and H379 together coordinate Zn(2+). N381 provides a ligand contact to (R)-2-hydroxyglutarate. A Zn(2+)-binding site is contributed by E418. A (R)-2-hydroxyglutarate-binding site is contributed by H419. Position 419 (H419) interacts with (R)-malate.

The protein belongs to the FAD-binding oxidoreductase/transferase type 4 family. Homodimer. The cofactor is FAD.

It catalyses the reaction (R)-2-hydroxyglutarate + A = 2-oxoglutarate + AH2. The catalysed reaction is (R)-malate + A = oxaloacetate + AH2. Its activity is regulated as follows. Activated by Zn(2+) ions. Catalyzes the dehydrogenation of (R)-2-hydroxyglutarate (D-2-hydroxyglutarate) to 2-oxoglutarate. Also has a low activity on D-malate in vitro. Is functionally tied to L-serine biosynthesis, via its coupling with the D-3-phosphoglycerate dehydrogenase SerA, encoded by the adjacent gene in the locus. Active in vitro with the artificial electron acceptor 2,6-dichlorophenolindophenol (DCPIP), but not with NAD, NADP, or cytochrome c. Also displays a very low oxidase activity in vitro on D-2-hydroxyglutarate and L-2-hydroxyglutarate with O2 as the electron acceptor, but this activity is most likely not physiological. The polypeptide is D-2-hydroxyglutarate dehydrogenase (Xanthomonas citri pv. viticola (strain LMG 965 / NCPPB 2475 / ICMP 3867 / CFBP 7660) (Xanthomonas campestris pv. viticola)).